The sequence spans 475 residues: Pentatricopeptide repeat-containing protein At1g29710, mitochondrial (475 aa).

The N-terminal 37 residues, 1–37 (MVRLWCGKLRLWKPYLALATQSRNSWFCSGGGAPSHH), are a transit peptide targeting the mitochondrion. 6 PPR repeats span residues 83–117 (AQNV…GYAM), 118–148 (DLIR…IIAL), 153–183 (DVGA…MPEW), 184–218 (NSGT…GNKP), 219–254 (NGEI…GIVP), and 255–285 (SMEH…MPME). The type E(+) motif stretch occupies residues 350-380 (YFYSTFRPVDSSHPQMNIIYETLMSLRSQLK). Positions 381–475 (EMGYVPDTRY…NGVCRCNNLW (95 aa)) are type DYW motif.

Belongs to the PPR family. PCMP-H subfamily.

It localises to the mitochondrion. This is Pentatricopeptide repeat-containing protein At1g29710, mitochondrial (PCMP-H67) from Arabidopsis thaliana (Mouse-ear cress).